A 493-amino-acid chain; its full sequence is Galactose-1-phosphate uridylyltransferase (493 aa).

This sequence belongs to the galactose-1-phosphate uridylyltransferase type 2 family.

It localises to the cytoplasm. It carries out the reaction alpha-D-galactose 1-phosphate + UDP-alpha-D-glucose = alpha-D-glucose 1-phosphate + UDP-alpha-D-galactose. Its pathway is carbohydrate metabolism; galactose metabolism. The protein is Galactose-1-phosphate uridylyltransferase of Lactococcus lactis subsp. cremoris (strain SK11).